The chain runs to 613 residues: Vitamin B12 transporter BtuB (613 aa).

The first 22 residues, methionine 1–alanine 22, serve as a signal peptide directing secretion. Residues aspartate 29–asparagine 36 carry the TonB box motif. A TBDR plug domain is found at valine 41–isoleucine 154. Residues glutamine 159 to phenylalanine 613 form the TBDR beta-barrel domain. Residues histidine 591–phenylalanine 613 carry the TonB C-terminal box motif.

It belongs to the TonB-dependent receptor family. BtuB (TC 1.B.14.3.1) subfamily.

It is found in the cell outer membrane. Its function is as follows. Involved in the active translocation of vitamin B12 (cyanocobalamin) across the outer membrane to the periplasmic space. It derives its energy for transport by interacting with the trans-periplasmic membrane protein TonB. This chain is Vitamin B12 transporter BtuB, found in Vibrio vulnificus (strain YJ016).